The chain runs to 513 residues: ATP synthase subunit alpha, mitochondrial (513 aa).

170–177 (GDRQTGKT) lines the ATP pocket.

This sequence belongs to the ATPase alpha/beta chains family. As to quaternary structure, F-type ATPases have 2 components, CF(1) - the catalytic core - and CF(0) - the membrane proton channel. CF(1) has five subunits: alpha(3), beta(3), gamma(1), delta(1), epsilon(1). CF(0) has three main subunits: a, b and c.

The protein resides in the mitochondrion. It localises to the mitochondrion inner membrane. Its function is as follows. Mitochondrial membrane ATP synthase (F(1)F(0) ATP synthase or Complex V) produces ATP from ADP in the presence of a proton gradient across the membrane which is generated by electron transport complexes of the respiratory chain. F-type ATPases consist of two structural domains, F(1) - containing the extramembraneous catalytic core, and F(0) - containing the membrane proton channel, linked together by a central stalk and a peripheral stalk. During catalysis, ATP synthesis in the catalytic domain of F(1) is coupled via a rotary mechanism of the central stalk subunits to proton translocation. Subunits alpha and beta form the catalytic core in F(1). Rotation of the central stalk against the surrounding alpha(3)beta(3) subunits leads to hydrolysis of ATP in three separate catalytic sites on the beta subunits. Subunit alpha does not bear the catalytic high-affinity ATP-binding sites. The protein is ATP synthase subunit alpha, mitochondrial (ATPA) of Marchantia polymorpha (Common liverwort).